The following is a 665-amino-acid chain: PR5-like receptor kinase (665 aa).

A signal peptide spans 1–24 (MVEGFSLSLMFLLVSHFFVSGVMS). Topologically, residues 25–276 (RNFTIENKCD…TKQKSSWKLK (252 aa)) are extracellular. 2 N-linked (GlcNAc...) asparagine glycosylation sites follow: Asn-26 and Asn-88. 8 disulfide bridges follow: Cys-33-Cys-249, Cys-81-Cys-91, Cys-96-Cys-103, Cys-153-Cys-238, Cys-158-Cys-221, Cys-166-Cys-184, Cys-188-Cys-197, and Cys-198-Cys-208. An N-linked (GlcNAc...) asparagine glycan is attached at Asn-163. Asn-233 carries an N-linked (GlcNAc...) asparagine glycan. A helical transmembrane segment spans residues 277-297 (LIVGVSAALTLMILIVVVIIV). Topologically, residues 298–665 (RTKNMRNSEW…DVLQHGSRSS (368 aa)) are cytoplasmic. The Protein kinase domain maps to 331-620 (NSFAHVLGKG…ALQVPPNPLL (290 aa)). ATP is bound by residues 337–345 (LGKGGFGTV) and Lys-360. Asp-455 acts as the Proton acceptor in catalysis.

In the N-terminal section; belongs to the thaumatin family. This sequence in the C-terminal section; belongs to the protein kinase superfamily. Ser/Thr protein kinase family. Autophosphorylated in vitro. Expressed in roots. Expressed at low levels in stems.

Its subcellular location is the membrane. It catalyses the reaction L-seryl-[protein] + ATP = O-phospho-L-seryl-[protein] + ADP + H(+). It carries out the reaction L-threonyl-[protein] + ATP = O-phospho-L-threonyl-[protein] + ADP + H(+). In terms of biological role, possesses kinase activity in vitro. The polypeptide is PR5-like receptor kinase (Arabidopsis thaliana (Mouse-ear cress)).